The following is a 1033-amino-acid chain: SIT4-associating protein SAP190 (1033 aa).

Disordered stretches follow at residues 32–82 (DQDD…TTES), 147–213 (PEII…QVET), 768–813 (FGND…HDSG), and 828–1033 (ENEE…KEAF). Basic and acidic residues predominate over residues 158-170 (ILIERDRKDKKED). Residues 171-182 (AEEGGDSEETTN) are compositionally biased toward acidic residues. Positions 183 to 195 (DSDHDSGDERSVD) are enriched in basic and acidic residues. A Phosphoserine modification is found at serine 774. Acidic residues-rich tracts occupy residues 784-793 (SEDIIGDTEG) and 828-838 (ENEEDYAEYSD). Serine 857, serine 862, and serine 892 each carry phosphoserine. A compositionally biased stretch (basic and acidic residues) spans 858–879 (DDGKSKSAESEFTDKISEHRDG). The segment covering 909 to 924 (SRSQPSDPKLQDQNIF) has biased composition (polar residues). The span at 932–944 (GVGDDDDYMDPND) shows a compositional bias: acidic residues. A Phosphothreonine modification is found at threonine 990. Serine 991 bears the Phosphoserine mark. A compositionally biased stretch (acidic residues) spans 1000–1018 (ISSDEEDSEDEDEENDMGN).

The protein belongs to the SAPS family. Associates with the SIT4 protein phosphatase catalytic subunit in a cell-cycle-dependent manner. Hyperphosphorylated in the absence of SIT4.

The protein resides in the cytoplasm. In terms of biological role, positive regulator of protein phosphatase SIT4. Involved in the general amino acid control (GAAC) response regulated by TOR. Involved in the dephosphorylation of the elongator complex subunit IKI3. This is SIT4-associating protein SAP190 (SAP190) from Saccharomyces cerevisiae (strain AWRI1631) (Baker's yeast).